Reading from the N-terminus, the 315-residue chain is Methionyl-tRNA formyltransferase (315 aa).

Residue 113-116 (SLLP) participates in (6S)-5,6,7,8-tetrahydrofolate binding.

Belongs to the Fmt family.

It catalyses the reaction L-methionyl-tRNA(fMet) + (6R)-10-formyltetrahydrofolate = N-formyl-L-methionyl-tRNA(fMet) + (6S)-5,6,7,8-tetrahydrofolate + H(+). Its function is as follows. Attaches a formyl group to the free amino group of methionyl-tRNA(fMet). The formyl group appears to play a dual role in the initiator identity of N-formylmethionyl-tRNA by promoting its recognition by IF2 and preventing the misappropriation of this tRNA by the elongation apparatus. The sequence is that of Methionyl-tRNA formyltransferase from Salmonella dublin (strain CT_02021853).